The chain runs to 617 residues: Dihydroxy-acid dehydratase (617 aa).

Asp-81 is a binding site for Mg(2+). Cys-122 lines the [2Fe-2S] cluster pocket. Mg(2+) is bound by residues Asp-123 and Lys-124. Position 124 is an N6-carboxylysine (Lys-124). [2Fe-2S] cluster is bound at residue Cys-197. Glu-494 contributes to the Mg(2+) binding site. Ser-520 functions as the Proton acceptor in the catalytic mechanism.

The protein belongs to the IlvD/Edd family. As to quaternary structure, homodimer. It depends on [2Fe-2S] cluster as a cofactor. Mg(2+) is required as a cofactor.

The enzyme catalyses (2R)-2,3-dihydroxy-3-methylbutanoate = 3-methyl-2-oxobutanoate + H2O. It carries out the reaction (2R,3R)-2,3-dihydroxy-3-methylpentanoate = (S)-3-methyl-2-oxopentanoate + H2O. The protein operates within amino-acid biosynthesis; L-isoleucine biosynthesis; L-isoleucine from 2-oxobutanoate: step 3/4. Its pathway is amino-acid biosynthesis; L-valine biosynthesis; L-valine from pyruvate: step 3/4. Its function is as follows. Functions in the biosynthesis of branched-chain amino acids. Catalyzes the dehydration of (2R,3R)-2,3-dihydroxy-3-methylpentanoate (2,3-dihydroxy-3-methylvalerate) into 2-oxo-3-methylpentanoate (2-oxo-3-methylvalerate) and of (2R)-2,3-dihydroxy-3-methylbutanoate (2,3-dihydroxyisovalerate) into 2-oxo-3-methylbutanoate (2-oxoisovalerate), the penultimate precursor to L-isoleucine and L-valine, respectively. This Frankia casuarinae (strain DSM 45818 / CECT 9043 / HFP020203 / CcI3) protein is Dihydroxy-acid dehydratase.